The sequence spans 367 residues: MDHVKLVNDPIDIAHIHQLLADEGCGASSVFVGTTRDNFQGKKVLSLAYEAYDSMALKEMNKICSDLRSKWLDLKHIVIYHRLGTVPVCQASVVIAASSPHRSEALESVSFAIDQLKTRVPIWKKEIYEGDNDSEWKENKESIRPKKSKSGFNYAACPCKVEESHDVPRTLVQIRVNDAELAKRLECFVNRKRDEINSQNVIDFKSSFVSSDKDLSDSCARTQSTIIKQEQSNCHLKVRRVNNRCGPQQMEMRPNYELELNKLMGSRDGQTDPTKEMRKSLPNSRLQAIESYMGLTTDNEENIFSRIKRVENRLLQLESISPEYRHFTKREPSSMEAAPPKKIRKKSYSAQELSAFIQKVKDGSEFS.

Residues 101 to 102 (HR), lysine 117, and 124 to 126 (KKE) each bind substrate. A disordered region spans residues 326-345 (HFTKREPSSMEAAPPKKIRK).

The protein belongs to the MoaE family. MOCS2B subfamily. As to quaternary structure, heterotetramer; composed of 2 small (Mocs2A) and 2 large (Mocs2B) subunits.

Its subcellular location is the cytoplasm. It carries out the reaction 2 [molybdopterin-synthase sulfur-carrier protein]-C-terminal-Gly-aminoethanethioate + cyclic pyranopterin phosphate + H2O = molybdopterin + 2 [molybdopterin-synthase sulfur-carrier protein]-C-terminal Gly-Gly + 2 H(+). The protein operates within cofactor biosynthesis; molybdopterin biosynthesis. Its function is as follows. Catalytic subunit of the molybdopterin synthase complex, a complex that catalyzes the conversion of precursor Z into molybdopterin. Acts by mediating the incorporation of 2 sulfur atoms from thiocarboxylated Mocs2A into precursor Z to generate a dithiolene group. The polypeptide is Molybdopterin synthase catalytic subunit (Drosophila sechellia (Fruit fly)).